Consider the following 232-residue polypeptide: Thiamine import ATP-binding protein ThiQ (232 aa).

Residues 2–230 (LKLTDITWLY…KASASALLGI (229 aa)) enclose the ABC transporter domain. An ATP-binding site is contributed by 32–39 (GPSGAGKS).

It belongs to the ABC transporter superfamily. Thiamine importer (TC 3.A.1.19.1) family. As to quaternary structure, the complex is composed of two ATP-binding proteins (ThiQ), two transmembrane proteins (ThiP) and a solute-binding protein (ThiB).

The protein localises to the cell inner membrane. The enzyme catalyses thiamine(out) + ATP + H2O = thiamine(in) + ADP + phosphate + H(+). In terms of biological role, part of the ABC transporter complex ThiBPQ involved in thiamine import. Responsible for energy coupling to the transport system. The polypeptide is Thiamine import ATP-binding protein ThiQ (Shigella sonnei (strain Ss046)).